Reading from the N-terminus, the 238-residue chain is Ribose-5-phosphate isomerase A (238 aa).

Residues 30 to 33 (SGST), 87 to 90 (DGAD), and 100 to 103 (KGGG) contribute to the substrate site. Catalysis depends on glutamate 109, which acts as the Proton acceptor. Lysine 127 contacts substrate.

Belongs to the ribose 5-phosphate isomerase family. In terms of assembly, homodimer.

It carries out the reaction aldehydo-D-ribose 5-phosphate = D-ribulose 5-phosphate. It participates in carbohydrate degradation; pentose phosphate pathway; D-ribose 5-phosphate from D-ribulose 5-phosphate (non-oxidative stage): step 1/1. In terms of biological role, catalyzes the reversible conversion of ribose-5-phosphate to ribulose 5-phosphate. This Prochlorococcus marinus (strain MIT 9303) protein is Ribose-5-phosphate isomerase A.